The following is a 239-amino-acid chain: Wilms tumor protein homolog (239 aa).

A 9aaTAD motif is present at residues 43–51 (MTWNQMNLG). C2H2-type zinc fingers lie at residues 113-137 (FMCA…SRKH), 143-167 (YQCD…QRRH), and 173-195 (FQCK…TRTH). Important for interaction with target DNA stretches follow at residues 157–171 (SDQL…TGVK) and 183–191 (SRSDHLKTH). A KTS motif motif is present at residues 198-200 (KTS). The C2H2-type 4 zinc finger occupies 204-228 (FSCRWPSCQKKFARSDELVRHHNMH). A Glycyl lysine isopeptide (Lys-Gly) (interchain with G-Cter in SUMO2) cross-link involves residue Lys-234.

Belongs to the EGR C2H2-type zinc-finger protein family. Interacts with ZNF224 via the zinc-finger region. Interacts with WTAP, AMER1 and SRY. Homodimer. Interacts with WTIP. Interacts with actively translating polysomes. Detected in nuclear ribonucleoprotein (mRNP) particles. Interacts with U2AF2. Interacts with HNRNPU via the zinc-finger region. Interacts with CITED2.

The protein localises to the nucleus speckle. The protein resides in the nucleus. Its subcellular location is the nucleoplasm. It is found in the cytoplasm. Transcription factor that plays an important role in cellular development and cell survival. Recognizes and binds to the DNA sequence 5'-GCG(T/G)GGGCG-3'. Regulates the expression of numerous target genes, including EPO. Plays an essential role for development of the urogenital system. It has a tumor suppressor as well as an oncogenic role in tumor formation. Function may be isoform-specific: isoforms lacking the KTS motif may act as transcription factors. Isoforms containing the KTS motif may bind mRNA and play a role in mRNA metabolism or splicing. In Sminthopsis macroura (Stripe-faced dunnart), this protein is Wilms tumor protein homolog (WT1).